A 325-amino-acid chain; its full sequence is ATP synthase gamma chain (325 aa).

Belongs to the ATPase gamma chain family. In terms of assembly, F-type ATPases have 2 components, CF(1) - the catalytic core - and CF(0) - the membrane proton channel. CF(1) has five subunits: alpha(3), beta(3), gamma(1), delta(1), epsilon(1). CF(0) has three main subunits: a, b and c.

It is found in the cell membrane. Produces ATP from ADP in the presence of a proton gradient across the membrane. The gamma chain is believed to be important in regulating ATPase activity and the flow of protons through the CF(0) complex. This chain is ATP synthase gamma chain, found in Corynebacterium glutamicum (strain R).